Reading from the N-terminus, the 160-residue chain is MNQIVLNIIIAFLWVLFQDEDHFKFSTFFSGYLIGLIVIYILHRFFSDDFYVRKIWVAIKFLGVYLYQLITSSISTINYILFKTKDMNPGLLSYETRLTSDWAITFLTILIIITPGSTVIRISQDSKKFFIHSIDVSEKEKDSLLRSIKHYEDLILEVSR.

A run of 3 helical transmembrane segments spans residues 22-42, 55-75, and 100-120; these read HFKFSTFFSGYLIGLIVIYIL, IWVAIKFLGVYLYQLITSSIS, and SDWAITFLTILIIITPGSTVI.

It belongs to the CPA3 antiporters (TC 2.A.63) subunit E family. In terms of assembly, may form a heterooligomeric complex that consists of seven subunits: mnhA2, mnhB2, mnhC2, mnhD2, mnhE2, mnhF2 and mnhG2.

The protein localises to the cell membrane. The chain is Putative antiporter subunit mnhE2 (mnhE2) from Staphylococcus aureus (strain Mu3 / ATCC 700698).